A 483-amino-acid polypeptide reads, in one-letter code: 2-methylcitrate dehydratase (483 aa).

Belongs to the PrpD family. In terms of assembly, monomer.

The enzyme catalyses (2S,3S)-2-methylcitrate = 2-methyl-cis-aconitate + H2O. It carries out the reaction citrate = D-threo-isocitrate. Its pathway is organic acid metabolism; propanoate degradation. The protein operates within carbohydrate metabolism; tricarboxylic acid cycle; isocitrate from oxaloacetate: step 2/2. Involved in the catabolism of short chain fatty acids (SCFA) via the tricarboxylic acid (TCA)(acetyl degradation route) and via the 2-methylcitrate cycle I (propionate degradation route). Catalyzes the dehydration of 2-methylcitrate (2-MC) to yield the cis isomer of 2-methyl-aconitate. It is also able to catalyze the dehydration of citrate and the hydration of cis-aconitate at a lower rate. Due to its broad substrate specificity, it seems to be responsible for the residual aconitase activity of the acnAB-null mutant. The sequence is that of 2-methylcitrate dehydratase from Escherichia coli (strain K12).